The sequence spans 139 residues: Superoxide dismutase [Cu-Zn] (139 aa).

Cysteine 6 carries the S-palmitoyl cysteine lipid modification. Positions 47 and 49 each coordinate Cu cation. Residues histidine 72, histidine 81, and aspartate 84 each contribute to the Zn(2+) site. Residue histidine 114 participates in Cu cation binding. A compositionally biased stretch (basic and acidic residues) spans 118–129 (DDLGKGGNDESL). Residues 118–139 (DDLGKGGNDESLKTGNAGGRMA) are disordered.

The protein belongs to the Cu-Zn superoxide dismutase family. In terms of assembly, homodimer. The cofactor is Cu cation. Requires Zn(2+) as cofactor.

Its subcellular location is the cytoplasm. The protein resides in the nucleus. It catalyses the reaction 2 superoxide + 2 H(+) = H2O2 + O2. Functionally, destroys radicals which are normally produced within the cells and which are toxic to biological systems. The sequence is that of Superoxide dismutase [Cu-Zn] (sod1) from Lampanyctus crocodilus (Jewel lanternfish).